Reading from the N-terminus, the 304-residue chain is Glutaminase (304 aa).

Residues serine 63, asparagine 114, glutamate 158, asparagine 165, tyrosine 189, tyrosine 240, and valine 258 each coordinate substrate.

This sequence belongs to the glutaminase family. As to quaternary structure, homotetramer.

The catalysed reaction is L-glutamine + H2O = L-glutamate + NH4(+). The chain is Glutaminase from Shewanella baltica (strain OS195).